The sequence spans 280 residues: Antiactivator FleN (280 aa).

Residues lysine 19–asparagine 26, glutamate 153, asparagine 181, proline 215–aspartate 217, and arginine 221 each bind ATP.

This sequence belongs to the ParA family. In terms of assembly, forms homodimers. Interacts with FleQ.

With respect to regulation, ATP-binding allows dimerization and subsequent antagonistic effect against FleQ. In terms of biological role, ATPase that plays an important role in maintaining flagellar number in Pseudomonas aeruginosa. Exhibits anti-activator activity against FleQ, the global transcriptional regulator of flagellar genes. The sequence is that of Antiactivator FleN from Pseudomonas aeruginosa (strain ATCC 15692 / DSM 22644 / CIP 104116 / JCM 14847 / LMG 12228 / 1C / PRS 101 / PAO1).